A 91-amino-acid polypeptide reads, in one-letter code: Large ribosomal subunit protein eL43 (91 aa).

The segment at 39–60 adopts a C4-type zinc-finger fold; sequence CSFCGKEAMKRKATGIWNCAKC.

Belongs to the eukaryotic ribosomal protein eL43 family.

This chain is Large ribosomal subunit protein eL43, found in Caenorhabditis elegans.